A 399-amino-acid polypeptide reads, in one-letter code: Argininosuccinate synthase (399 aa).

Residues 8–16 (AYSGGLDTS) and alanine 35 contribute to the ATP site. An L-citrulline-binding site is contributed by tyrosine 87. Glycine 117 provides a ligand contact to ATP. Residues threonine 119, asparagine 123, and aspartate 124 each coordinate L-aspartate. Asparagine 123 serves as a coordination point for L-citrulline. L-citrulline contacts are provided by arginine 127, serine 176, serine 185, glutamate 261, and tyrosine 273.

It belongs to the argininosuccinate synthase family. Type 1 subfamily. Homotetramer.

The protein localises to the cytoplasm. The catalysed reaction is L-citrulline + L-aspartate + ATP = 2-(N(omega)-L-arginino)succinate + AMP + diphosphate + H(+). Its pathway is amino-acid biosynthesis; L-arginine biosynthesis; L-arginine from L-ornithine and carbamoyl phosphate: step 2/3. The chain is Argininosuccinate synthase from Buchnera aphidicola subsp. Cinara cedri (strain Cc).